Here is a 240-residue protein sequence, read N- to C-terminus: Uridylate kinase (240 aa).

13–16 (KASG) contributes to the ATP binding site. An involved in allosteric activation by GTP region spans residues 21–26 (GSQGFG). Glycine 55 contacts UMP. 2 residues coordinate ATP: glycine 56 and arginine 60. UMP-binding positions include aspartate 75 and 136–143 (TGNPFFTT). Residues threonine 163, glutamine 164, tyrosine 169, and aspartate 172 each coordinate ATP.

This sequence belongs to the UMP kinase family. As to quaternary structure, homohexamer.

The protein localises to the cytoplasm. It catalyses the reaction UMP + ATP = UDP + ADP. It participates in pyrimidine metabolism; CTP biosynthesis via de novo pathway; UDP from UMP (UMPK route): step 1/1. Its activity is regulated as follows. Allosterically activated by GTP. Inhibited by UTP. Functionally, catalyzes the reversible phosphorylation of UMP to UDP. This is Uridylate kinase from Brucella abortus biovar 1 (strain 9-941).